A 416-amino-acid chain; its full sequence is Histidine--tRNA ligase (416 aa).

This sequence belongs to the class-II aminoacyl-tRNA synthetase family. Homodimer.

Its subcellular location is the cytoplasm. It catalyses the reaction tRNA(His) + L-histidine + ATP = L-histidyl-tRNA(His) + AMP + diphosphate + H(+). The polypeptide is Histidine--tRNA ligase (Clostridium novyi (strain NT)).